The chain runs to 156 residues: 16 kDa phloem protein 1 (156 aa).

One can recognise a C2 domain in the interval 1–108 (MAVGILEVSL…LEMGVEKGTA (108 aa)). The Ca(2+) site is built by D20, D26, D78, D80, S83, and D86.

Requires Ca(2+) as cofactor.

Functionally, binds to both sense and antisense RNA. Can also bind sheared DNA and dodecamer DNA with a low affinity. Interacts with mesophyll plasmodesmata to mediate its own cell-to-cell transport and potentiate RNA trafficking. May play a role in plant defense signaling. The chain is 16 kDa phloem protein 1 from Arabidopsis thaliana (Mouse-ear cress).